Here is a 707-residue protein sequence, read N- to C-terminus: NADP(+)-dependent formate dehydrogenase subunit beta (707 aa).

In terms of assembly, heterotetramer composed of two alpha (FdhA) and two beta (FdhB) subunits.

The protein resides in the cytoplasm. The enzyme catalyses formate + NADP(+) = CO2 + NADPH. Activity is very sensitive to oxygen. The activity in growing cells is enhanced when selenite and molybdate are added together to the growth medium. Tungstate replaces and is better than molybdate. Selenite is incorporated into the enzyme. Requires a sulfhydryl compound for activity. Inhibited by cyanide, EDTA, hypophosphite and mercaptoethanol. Sulfite inhibits the activity with NADP but not with methyl viologen as electron acceptor. Its function is as follows. Component of a dehydrogenase that catalyzes the NADP-dependent reduction of CO(2) to formate, the first step in the synthesis of the methyl group of acetate during synthesis of acetate from CO(2). In vitro, can use methyl viologen and benzyl viologen in addition to its natural electron acceptor. The sequence is that of NADP(+)-dependent formate dehydrogenase subunit beta from Moorella thermoacetica (Clostridium thermoaceticum).